The primary structure comprises 216 residues: Dephospho-CoA kinase (216 aa).

Residues Ile18–Lys216 form the DPCK domain. Cys26–Thr31 contributes to the ATP binding site.

Belongs to the CoaE family.

It is found in the cytoplasm. It carries out the reaction 3'-dephospho-CoA + ATP = ADP + CoA + H(+). Its pathway is cofactor biosynthesis; coenzyme A biosynthesis; CoA from (R)-pantothenate: step 5/5. Catalyzes the phosphorylation of the 3'-hydroxyl group of dephosphocoenzyme A to form coenzyme A. The chain is Dephospho-CoA kinase from Rhodopirellula baltica (strain DSM 10527 / NCIMB 13988 / SH1).